A 567-amino-acid polypeptide reads, in one-letter code: Urease subunit alpha (567 aa).

Residues 129–567 enclose the Urease domain; that stretch reads GGIDTHIHFI…LPMAQRYFLF (439 aa). The Ni(2+) site is built by His-134, His-136, and Lys-217. N6-carboxylysine is present on Lys-217. His-219 serves as a coordination point for substrate. 2 residues coordinate Ni(2+): His-246 and His-272. His-320 acts as the Proton donor in catalysis. Ni(2+) is bound at residue Asp-360.

Belongs to the metallo-dependent hydrolases superfamily. Urease alpha subunit family. As to quaternary structure, probable heterotrimer of UreA (gamma), UreB (beta) and UreC (alpha) subunits. Three heterotrimers associate to form the active enzyme. The trimeric urease interacts with an accessory complex composed of UreD, UreF and UreG, which is required for the assembly of the nickel containing metallocenter of UreC. The UreE protein may also play a direct role in nickel transfer to the urease apoprotein. The cofactor is Ni cation. Carboxylation allows a single lysine to coordinate two nickel ions.

It is found in the cytoplasm. It carries out the reaction urea + 2 H2O + H(+) = hydrogencarbonate + 2 NH4(+). The protein operates within nitrogen metabolism; urea degradation; CO(2) and NH(3) from urea (urease route): step 1/1. In Proteus mirabilis (strain HI4320), this protein is Urease subunit alpha.